Here is a 187-residue protein sequence, read N- to C-terminus: Peptidyl-tRNA hydrolase (187 aa).

A tRNA-binding site is contributed by Y18. H23 serves as the catalytic Proton acceptor. Positions 65, 67, and 113 each coordinate tRNA.

This sequence belongs to the PTH family. In terms of assembly, monomer.

The protein localises to the cytoplasm. The enzyme catalyses an N-acyl-L-alpha-aminoacyl-tRNA + H2O = an N-acyl-L-amino acid + a tRNA + H(+). Its function is as follows. Hydrolyzes ribosome-free peptidyl-tRNAs (with 1 or more amino acids incorporated), which drop off the ribosome during protein synthesis, or as a result of ribosome stalling. Functionally, catalyzes the release of premature peptidyl moieties from peptidyl-tRNA molecules trapped in stalled 50S ribosomal subunits, and thus maintains levels of free tRNAs and 50S ribosomes. This is Peptidyl-tRNA hydrolase from Coxiella burnetii (strain CbuK_Q154) (Coxiella burnetii (strain Q154)).